Consider the following 150-residue polypeptide: D-aminoacyl-tRNA deacylase (150 aa).

Positions 138-139 match the Gly-cisPro motif, important for rejection of L-amino acids motif; the sequence is GP.

Belongs to the DTD family. As to quaternary structure, homodimer.

Its subcellular location is the cytoplasm. The enzyme catalyses glycyl-tRNA(Ala) + H2O = tRNA(Ala) + glycine + H(+). It catalyses the reaction a D-aminoacyl-tRNA + H2O = a tRNA + a D-alpha-amino acid + H(+). Its function is as follows. An aminoacyl-tRNA editing enzyme that deacylates mischarged D-aminoacyl-tRNAs. Also deacylates mischarged glycyl-tRNA(Ala), protecting cells against glycine mischarging by AlaRS. Acts via tRNA-based rather than protein-based catalysis; rejects L-amino acids rather than detecting D-amino acids in the active site. By recycling D-aminoacyl-tRNA to D-amino acids and free tRNA molecules, this enzyme counteracts the toxicity associated with the formation of D-aminoacyl-tRNA entities in vivo and helps enforce protein L-homochirality. This Chlorobium phaeobacteroides (strain DSM 266 / SMG 266 / 2430) protein is D-aminoacyl-tRNA deacylase.